The following is a 23-amino-acid chain: Major prohead-scaffolding core protein Gp22 (23 aa).

The interval K1–E23 is disordered. Positions E7–E23 are enriched in basic and acidic residues.

Gp22 functions in head assembly. In terms of biological role, internal peptide VII: Cleavage product of Gp22 that is incorporated into the mature phage head. This chain is Major prohead-scaffolding core protein Gp22 (22), found in Enterobacteria phage T2 (Bacteriophage T2).